Here is a 97-residue protein sequence, read N- to C-terminus: Theromacin (97 aa).

An N-terminal signal peptide occupies residues 1–22 (MELKSGLSILLCFGICIAVINA). 5 disulfide bridges follow: Cys24–Cys31, Cys46–Cys50, Cys53–Cys95, Cys61–Cys69, and Cys79–Cys81.

As to expression, coelomic liquid (at protein level). Expressed in large fat cells in contact with coelomic cavities, in intestinal epithelia and at the epidermis level.

The protein resides in the secreted. Has a bactericidal activity. Active against M.luteus. No activity toward E.coli and F.oxysporum. The chain is Theromacin from Theromyzon tessulatum (Duck leech).